Reading from the N-terminus, the 529-residue chain is MTKYIIVTGGVLSSVGKGTIVASIGFLLKSSGYNVTAIKVDPYLNVDAGTMNPYMHGEVFVTDDGAETDLDLGHYERFIGINTTRYNNITAGRVYFEVIRKEREGKYLGQTVQIIPHVTDEIKGLVKKAVDDTNAEIAIIEIGGTVGDIEGLPFLEAVRQMKLEEEENLMFIHVALVEYLRVTGELKTKPLQHSVQELRRIGIQPDMIIARSILPLDEETKKKIALFTNVKPDYILSNYDVELTYEVPLILEKQNITKKIFNKLGLEPKEPKVAEWLEFVENMKNPSKEVKIALVGKYTKLKDSYLSIKEAIYHAAAKLRVKPTLVWVESSDLEKSEDEINKLKDVNGIIVLPGFGARGVEGKIQAIKFARENNIPFLGICFGMQLAIVEYARNVLGLKEANTTEVNPNTKYPIITLLDNQKKIVQVGGTMRLGAQKIILKEGTLAYSIYNSPHIYERHRHRYEVNPEYVDLLQKYGMIISGVSENGLVEIIELKNHKFFLGTQAHPEYKSRPLSPSPVFLNFLSVASA.

Positions 1 to 266 (MTKYIIVTGG…TKKIFNKLGL (266 aa)) are amidoligase domain. Residue Ser-13 participates in CTP binding. Residue Ser-13 participates in UTP binding. Position 14–19 (14–19 (SVGKGT)) interacts with ATP. Residue Tyr-54 coordinates L-glutamine. Asp-71 contributes to the ATP binding site. Mg(2+) is bound by residues Asp-71 and Glu-141. CTP contacts are provided by residues 148 to 150 (DIE), 187 to 192 (KTKPLQ), and Lys-223. Residues 187–192 (KTKPLQ) and Lys-223 contribute to the UTP site. Positions 291-529 (KIALVGKYTK…FLNFLSVASA (239 aa)) constitute a Glutamine amidotransferase type-1 domain. Gly-354 is a binding site for L-glutamine. Residue Cys-381 is the Nucleophile; for glutamine hydrolysis of the active site. Residues 382–385 (FGMQ), Glu-405, and Arg-462 each bind L-glutamine. Active-site residues include His-506 and Glu-508.

The protein belongs to the CTP synthase family. As to quaternary structure, homotetramer.

It catalyses the reaction UTP + L-glutamine + ATP + H2O = CTP + L-glutamate + ADP + phosphate + 2 H(+). The catalysed reaction is L-glutamine + H2O = L-glutamate + NH4(+). It carries out the reaction UTP + NH4(+) + ATP = CTP + ADP + phosphate + 2 H(+). It participates in pyrimidine metabolism; CTP biosynthesis via de novo pathway; CTP from UDP: step 2/2. With respect to regulation, allosterically activated by GTP, when glutamine is the substrate; GTP has no effect on the reaction when ammonia is the substrate. The allosteric effector GTP functions by stabilizing the protein conformation that binds the tetrahedral intermediate(s) formed during glutamine hydrolysis. Inhibited by the product CTP, via allosteric rather than competitive inhibition. In terms of biological role, catalyzes the ATP-dependent amination of UTP to CTP with either L-glutamine or ammonia as the source of nitrogen. Regulates intracellular CTP levels through interactions with the four ribonucleotide triphosphates. The polypeptide is CTP synthase (Sulfolobus acidocaldarius (strain ATCC 33909 / DSM 639 / JCM 8929 / NBRC 15157 / NCIMB 11770)).